Consider the following 308-residue polypeptide: Ribosomal RNA large subunit methyltransferase F (308 aa).

Belongs to the methyltransferase superfamily. METTL16/RlmF family.

It is found in the cytoplasm. It carries out the reaction adenosine(1618) in 23S rRNA + S-adenosyl-L-methionine = N(6)-methyladenosine(1618) in 23S rRNA + S-adenosyl-L-homocysteine + H(+). Functionally, specifically methylates the adenine in position 1618 of 23S rRNA. This chain is Ribosomal RNA large subunit methyltransferase F, found in Escherichia coli O17:K52:H18 (strain UMN026 / ExPEC).